Consider the following 666-residue polypeptide: DNA ligase (666 aa).

Residues aspartate 34–aspartate 38, serine 83–leucine 84, and glutamate 114 each bind NAD(+). Lysine 116 acts as the N6-AMP-lysine intermediate in catalysis. 4 residues coordinate NAD(+): arginine 137, glutamate 171, lysine 286, and lysine 310. Zn(2+)-binding residues include cysteine 404, cysteine 407, cysteine 422, and cysteine 427. The 79-residue stretch at asparagine 588–glutamate 666 folds into the BRCT domain.

The protein belongs to the NAD-dependent DNA ligase family. LigA subfamily. Requires Mg(2+) as cofactor. The cofactor is Mn(2+).

It carries out the reaction NAD(+) + (deoxyribonucleotide)n-3'-hydroxyl + 5'-phospho-(deoxyribonucleotide)m = (deoxyribonucleotide)n+m + AMP + beta-nicotinamide D-nucleotide.. In terms of biological role, DNA ligase that catalyzes the formation of phosphodiester linkages between 5'-phosphoryl and 3'-hydroxyl groups in double-stranded DNA using NAD as a coenzyme and as the energy source for the reaction. It is essential for DNA replication and repair of damaged DNA. This is DNA ligase from Mesoplasma florum (strain ATCC 33453 / NBRC 100688 / NCTC 11704 / L1) (Acholeplasma florum).